A 309-amino-acid polypeptide reads, in one-letter code: Ornithine carbamoyltransferase (309 aa).

Carbamoyl phosphate-binding positions include 51–54 (STRT), glutamine 78, arginine 102, and 129–132 (HPVQ). Residues asparagine 159, aspartate 223, and 227–228 (SM) each bind L-ornithine. Residues 263–264 (CL) and arginine 291 contribute to the carbamoyl phosphate site.

It belongs to the aspartate/ornithine carbamoyltransferase superfamily. OTCase family.

The protein resides in the cytoplasm. The catalysed reaction is carbamoyl phosphate + L-ornithine = L-citrulline + phosphate + H(+). The protein operates within amino-acid biosynthesis; L-arginine biosynthesis; L-arginine from L-ornithine and carbamoyl phosphate: step 1/3. Reversibly catalyzes the transfer of the carbamoyl group from carbamoyl phosphate (CP) to the N(epsilon) atom of ornithine (ORN) to produce L-citrulline. The chain is Ornithine carbamoyltransferase from Nitratiruptor sp. (strain SB155-2).